Here is a 442-residue protein sequence, read N- to C-terminus: METMDTSVDLPGRWIDIEKIIKRTGPFASPSFEPDTKASPNIMNGLQNDFKVLVIGAGGLGCEILKNLALSGFRNIDVIDMDTIDISNLNRQFLFRRKDVGKSKAEVAAAFINSRITGCNVTPHKCRIQDKDEDYYRQFKIVIAGLDSIEARRWINGLLVNLVVVNDSGDIEPDTIIPLVDGGTEGFKGQARVILPKISSCFECSLDAFPPQVSYAICTIANTPRVPEHCIQWALLFGLQDATLEKPFDPKQFDNDNPDHMNWLFECAKKRAEKFNINGVTYKLTQGVAKNIIPAIASTNAIIAAACCNEVFKFCTDSSGYLNNYMMYNGLNGVYTFTFEYEIKEGCAVCGTNLVTFEIDKSNTLSTFLEKITTDSRFQFKKPSLRSNGRNLYMQGLLHQSTVPNLEKTLSELNVQEDDEITITDPALPGNLAVRMRIKYTS.

ATP contacts are provided by residues 80 to 104 (DMDT…GKSK) and 128 to 151 (IQDK…SIEA). Cysteine 218 acts as the Glycyl thioester intermediate in catalysis.

It belongs to the ubiquitin-activating E1 family. UBA3 subfamily. As to quaternary structure, heterodimer of uba3 and nae1. The complex binds nedd8 and ube2m.

The enzyme catalyses ATP + [NEDD8 protein] + [E1 NEDD8-activating enzyme]-L-cysteine = AMP + diphosphate + [E1 NEDD8-activating enzyme]-S-[NEDD8 protein]-yl-L-cysteine.. Its pathway is protein modification; protein neddylation. Functionally, regulatory subunit of the dimeric uba3-nae1 E1 enzyme. E1 activates nedd8 by first adenylating its C-terminal glycine residue with ATP, thereafter linking this residue to the side chain of the catalytic cysteine, yielding a nedd8-uba3 thioester and free AMP. E1 finally transfers nedd8 to the catalytic cysteine of ube2m. In Dictyostelium discoideum (Social amoeba), this protein is NEDD8-activating enzyme E1 catalytic subunit (uba3).